Consider the following 263-residue polypeptide: MILDEIIKKTREDIIKRESEFSLDWLGRSLAFNSRAPRDVFSYLSATPEDPYRVIAEVKKASPSRGVIRENFDPIAIAQSYEIGGASAISILTEPHFFQGNLDYLAQIRRYVSIPLLRKDFIVTKYQILEALVHGADFILLIAAALSKAELKELLGYTRHLGMEALVEVHDKSDLVKAIYAGSDIIGINHRNLQTFEMNMNLSYELIPLIPNGKIIVAESGIYEHGQLEDLSKAGVDAFLVGESLMREDDEEAALKKLKFGSN.

It belongs to the TrpC family.

The catalysed reaction is 1-(2-carboxyphenylamino)-1-deoxy-D-ribulose 5-phosphate + H(+) = (1S,2R)-1-C-(indol-3-yl)glycerol 3-phosphate + CO2 + H2O. Its pathway is amino-acid biosynthesis; L-tryptophan biosynthesis; L-tryptophan from chorismate: step 4/5. The sequence is that of Indole-3-glycerol phosphate synthase from Sulfurimonas denitrificans (strain ATCC 33889 / DSM 1251) (Thiomicrospira denitrificans (strain ATCC 33889 / DSM 1251)).